We begin with the raw amino-acid sequence, 345 residues long: Dihydroorotate dehydrogenase (quinone) (345 aa).

Residues 65–69 (AGLDK) and Thr-89 each bind FMN. Residue Lys-69 coordinates substrate. 114–118 (NRMGF) contacts substrate. FMN contacts are provided by Asn-142 and Asn-175. Residue Asn-175 coordinates substrate. The active-site Nucleophile is the Ser-178. Asn-180 is a binding site for substrate. FMN contacts are provided by Lys-220 and Thr-248. Residue 249–250 (NT) coordinates substrate. FMN-binding positions include Gly-271, Gly-300, and 321 to 322 (YT).

The protein belongs to the dihydroorotate dehydrogenase family. Type 2 subfamily. As to quaternary structure, monomer. It depends on FMN as a cofactor.

It is found in the cell membrane. It catalyses the reaction (S)-dihydroorotate + a quinone = orotate + a quinol. It participates in pyrimidine metabolism; UMP biosynthesis via de novo pathway; orotate from (S)-dihydroorotate (quinone route): step 1/1. Its function is as follows. Catalyzes the conversion of dihydroorotate to orotate with quinone as electron acceptor. This Burkholderia cenocepacia (strain ATCC BAA-245 / DSM 16553 / LMG 16656 / NCTC 13227 / J2315 / CF5610) (Burkholderia cepacia (strain J2315)) protein is Dihydroorotate dehydrogenase (quinone).